Reading from the N-terminus, the 181-residue chain is MENTQENPATQSAEDIGSEKQAAQGAAPAAEAADAALAEAQAKVAELQESYLRAKAETENVRRRAQDDVSKAHKFAIEGFAEHLLPVLDSLEAAVNDTSGDITKVREGVELTLRQLTNALEKGRVVALNPVGEKFDPHQHQAISMVPAEQEPNTVVTVLQKGYTIADRVLRPALVTVAQPK.

Residues 1-13 show a composition bias toward polar residues; that stretch reads MENTQENPATQSA. The segment at 1-39 is disordered; it reads MENTQENPATQSAEDIGSEKQAAQGAAPAAEAADAALAE. Residues 21-39 are compositionally biased toward low complexity; the sequence is QAAQGAAPAAEAADAALAE.

This sequence belongs to the GrpE family. Homodimer.

It localises to the cytoplasm. Functionally, participates actively in the response to hyperosmotic and heat shock by preventing the aggregation of stress-denatured proteins, in association with DnaK and GrpE. It is the nucleotide exchange factor for DnaK and may function as a thermosensor. Unfolded proteins bind initially to DnaJ; upon interaction with the DnaJ-bound protein, DnaK hydrolyzes its bound ATP, resulting in the formation of a stable complex. GrpE releases ADP from DnaK; ATP binding to DnaK triggers the release of the substrate protein, thus completing the reaction cycle. Several rounds of ATP-dependent interactions between DnaJ, DnaK and GrpE are required for fully efficient folding. In Burkholderia lata (strain ATCC 17760 / DSM 23089 / LMG 22485 / NCIMB 9086 / R18194 / 383), this protein is Protein GrpE.